The sequence spans 550 residues: Mycosin-2 (550 aa).

Residues 1–33 (MASPLNRPGLRAAAASAALTLVALSANVPAAQA) form the signal peptide. The segment at 34 to 62 (IPPPSVDPAMVPADARPGPDQPMRRSNSC) is disordered. The Peptidase S8 domain maps to 79 to 490 (GFNLVNISKA…YGLVDPVAAL (412 aa)). Active-site charge relay system residues include D103 and H133. Residues 168–190 (PPVTAAPAPPVEVPPPMPPPPPV) are compositionally biased toward pro residues. Positions 168–236 (PPVTAAPAPP…PPPPPGAPDG (69 aa)) are disordered. Catalysis depends on S435, which acts as the Charge relay system. The chain crosses the membrane as a helical span at residues 524-544 (NIAIGFVGAVATGVLAMAIGA).

The protein belongs to the peptidase S8 family.

Its subcellular location is the cell membrane. The protein is Mycosin-2 of Mycobacterium tuberculosis (strain ATCC 25618 / H37Rv).